Here is a 359-residue protein sequence, read N- to C-terminus: Ribosomal RNA large subunit methyltransferase M (359 aa).

S-adenosyl-L-methionine is bound by residues Ser186, 219 to 222 (CPGG), Asp238, Asp258, and Asp275. The Proton acceptor role is filled by Lys304.

It belongs to the class I-like SAM-binding methyltransferase superfamily. RNA methyltransferase RlmE family. RlmM subfamily. As to quaternary structure, monomer.

It localises to the cytoplasm. It carries out the reaction cytidine(2498) in 23S rRNA + S-adenosyl-L-methionine = 2'-O-methylcytidine(2498) in 23S rRNA + S-adenosyl-L-homocysteine + H(+). Functionally, catalyzes the 2'-O-methylation at nucleotide C2498 in 23S rRNA. The chain is Ribosomal RNA large subunit methyltransferase M from Vibrio parahaemolyticus serotype O3:K6 (strain RIMD 2210633).